The chain runs to 486 residues: Histone acetyltransferase type B catalytic subunit DDB_G0274269 (486 aa).

Residues D27–D69 adopt a coiled-coil conformation. A compositionally biased stretch (basic and acidic residues) spans N33 to D50. Positions N33–T78 are disordered. The region spanning V189–Y386 is the N-acetyltransferase domain. Acetyl-CoA is bound by residues Y260–I262 and Q267–K273. E299 acts as the Proton donor/acceptor in catalysis. Positions D392–L481 form a coiled coil.

The protein belongs to the HAT1 family.

The enzyme catalyses L-lysyl-[protein] + acetyl-CoA = N(6)-acetyl-L-lysyl-[protein] + CoA + H(+). The protein is Histone acetyltransferase type B catalytic subunit DDB_G0274269 of Dictyostelium discoideum (Social amoeba).